Consider the following 234-residue polypeptide: Thiamine-phosphate synthase (234 aa).

4-amino-2-methyl-5-(diphosphooxymethyl)pyrimidine is bound by residues 65 to 69 (QYRNK) and Asn-97. Positions 98 and 117 each coordinate Mg(2+). Ser-136 is a 4-amino-2-methyl-5-(diphosphooxymethyl)pyrimidine binding site. 163–165 (SHT) contributes to the 2-[(2R,5Z)-2-carboxy-4-methylthiazol-5(2H)-ylidene]ethyl phosphate binding site. 4-amino-2-methyl-5-(diphosphooxymethyl)pyrimidine is bound at residue Lys-166. 2-[(2R,5Z)-2-carboxy-4-methylthiazol-5(2H)-ylidene]ethyl phosphate is bound by residues Gly-192 and 212–213 (IS).

This sequence belongs to the thiamine-phosphate synthase family. Mg(2+) serves as cofactor.

The enzyme catalyses 2-[(2R,5Z)-2-carboxy-4-methylthiazol-5(2H)-ylidene]ethyl phosphate + 4-amino-2-methyl-5-(diphosphooxymethyl)pyrimidine + 2 H(+) = thiamine phosphate + CO2 + diphosphate. It carries out the reaction 2-(2-carboxy-4-methylthiazol-5-yl)ethyl phosphate + 4-amino-2-methyl-5-(diphosphooxymethyl)pyrimidine + 2 H(+) = thiamine phosphate + CO2 + diphosphate. It catalyses the reaction 4-methyl-5-(2-phosphooxyethyl)-thiazole + 4-amino-2-methyl-5-(diphosphooxymethyl)pyrimidine + H(+) = thiamine phosphate + diphosphate. Its pathway is cofactor biosynthesis; thiamine diphosphate biosynthesis; thiamine phosphate from 4-amino-2-methyl-5-diphosphomethylpyrimidine and 4-methyl-5-(2-phosphoethyl)-thiazole: step 1/1. Functionally, condenses 4-methyl-5-(beta-hydroxyethyl)thiazole monophosphate (THZ-P) and 2-methyl-4-amino-5-hydroxymethyl pyrimidine pyrophosphate (HMP-PP) to form thiamine monophosphate (TMP). In Xylella fastidiosa (strain 9a5c), this protein is Thiamine-phosphate synthase.